The chain runs to 414 residues: MAKNPKILSIVLAGGEGTRLMPLTRDRAKPAVPFGGVFRLIDFPLSNLVNSGYMQTVVLTQYKSHSLDRHISTVWRFSPLLGNYVSPVPAQQRLGKHWYLGSADAIYQTINIIEDVQPDIVVIVGADHVYRMDFQQMVQQHIESGAEFTVAGIRQPISQSNQFGVIEVDPDHPNMIKSFQEKPQTTTGLPDDPNSILASMGNYVANTDALFAALSLDEKAEDTKHDMGGDIAPYFAARNEAGVYDFNSNEIPGATPTDHAYWRDVGTLKQFYDAHMDLISYVPEFNLYNTEWPIYTLSGNLPPAKFVHAGRDRLGHATDSIVSPGVIVSGGEVHHSVLSPNVRIHSWSQVVDSILFDGVVVNRRARVYKAILDKNVVLTENSTVGIDTEHDLARGFTVTPEGITVVPKGTVVDD.

Alpha-D-glucose 1-phosphate contacts are provided by residues Tyr-99, Gly-164, 181 to 182, and Ser-199; that span reads EK.

It belongs to the bacterial/plant glucose-1-phosphate adenylyltransferase family. Homotetramer.

It catalyses the reaction alpha-D-glucose 1-phosphate + ATP + H(+) = ADP-alpha-D-glucose + diphosphate. It functions in the pathway glycan biosynthesis; glycogen biosynthesis. In terms of biological role, involved in the biosynthesis of ADP-glucose, a building block required for the elongation reactions to produce glycogen. Catalyzes the reaction between ATP and alpha-D-glucose 1-phosphate (G1P) to produce pyrophosphate and ADP-Glc. The sequence is that of Glucose-1-phosphate adenylyltransferase from Bifidobacterium adolescentis (strain ATCC 15703 / DSM 20083 / NCTC 11814 / E194a).